We begin with the raw amino-acid sequence, 332 residues long: Adenosine deaminase (332 aa).

The Zn(2+) site is built by His-12 and His-14. Residues His-14, Asp-16, and Gly-170 each coordinate substrate. Zn(2+) is bound at residue His-197. The active-site Proton donor is Glu-200. Residue Asp-278 participates in Zn(2+) binding.

The protein belongs to the metallo-dependent hydrolases superfamily. Adenosine and AMP deaminases family. Adenosine deaminase subfamily. Requires Zn(2+) as cofactor.

The catalysed reaction is adenosine + H2O + H(+) = inosine + NH4(+). The enzyme catalyses 2'-deoxyadenosine + H2O + H(+) = 2'-deoxyinosine + NH4(+). Catalyzes the hydrolytic deamination of adenosine and 2-deoxyadenosine. This is Adenosine deaminase from Clostridium perfringens (strain 13 / Type A).